The sequence spans 274 residues: 2,3,4,5-tetrahydropyridine-2,6-dicarboxylate N-succinyltransferase (274 aa).

R104 and D141 together coordinate substrate.

Belongs to the transferase hexapeptide repeat family. Homotrimer.

Its subcellular location is the cytoplasm. The enzyme catalyses (S)-2,3,4,5-tetrahydrodipicolinate + succinyl-CoA + H2O = (S)-2-succinylamino-6-oxoheptanedioate + CoA. Its pathway is amino-acid biosynthesis; L-lysine biosynthesis via DAP pathway; LL-2,6-diaminopimelate from (S)-tetrahydrodipicolinate (succinylase route): step 1/3. This Salmonella typhi protein is 2,3,4,5-tetrahydropyridine-2,6-dicarboxylate N-succinyltransferase.